Here is a 286-residue protein sequence, read N- to C-terminus: Light-independent protochlorophyllide reductase iron-sulfur ATP-binding protein (286 aa).

Residues 10 to 15 and Lys-39 each bind ATP; that span reads GIGKST. Residue Ser-14 coordinates Mg(2+). [4Fe-4S] cluster-binding residues include Cys-95 and Cys-129. 180–181 is an ATP binding site; sequence NR.

The protein belongs to the NifH/BchL/ChlL family. In terms of assembly, homodimer. Protochlorophyllide reductase is composed of three subunits; ChlL, ChlN and ChlB. Requires [4Fe-4S] cluster as cofactor.

It carries out the reaction chlorophyllide a + oxidized 2[4Fe-4S]-[ferredoxin] + 2 ADP + 2 phosphate = protochlorophyllide a + reduced 2[4Fe-4S]-[ferredoxin] + 2 ATP + 2 H2O. Its pathway is porphyrin-containing compound metabolism; chlorophyll biosynthesis (light-independent). Its function is as follows. Component of the dark-operative protochlorophyllide reductase (DPOR) that uses Mg-ATP and reduced ferredoxin to reduce ring D of protochlorophyllide (Pchlide) to form chlorophyllide a (Chlide). This reaction is light-independent. The L component serves as a unique electron donor to the NB-component of the complex, and binds Mg-ATP. The protein is Light-independent protochlorophyllide reductase iron-sulfur ATP-binding protein of Synechococcus elongatus (strain ATCC 33912 / PCC 7942 / FACHB-805) (Anacystis nidulans R2).